Consider the following 414-residue polypeptide: Glutamyl-tRNA reductase (414 aa).

Substrate contacts are provided by residues 49 to 52 (TCNR), S108, 113 to 115 (EPQ), and Q119. C50 acts as the Nucleophile in catalysis. NADP(+) is bound at residue 188 to 193 (GAGQTG).

The protein belongs to the glutamyl-tRNA reductase family. As to quaternary structure, homodimer.

It catalyses the reaction (S)-4-amino-5-oxopentanoate + tRNA(Glu) + NADP(+) = L-glutamyl-tRNA(Glu) + NADPH + H(+). It participates in porphyrin-containing compound metabolism; protoporphyrin-IX biosynthesis; 5-aminolevulinate from L-glutamyl-tRNA(Glu): step 1/2. Its function is as follows. Catalyzes the NADPH-dependent reduction of glutamyl-tRNA(Glu) to glutamate 1-semialdehyde (GSA). The sequence is that of Glutamyl-tRNA reductase from Francisella tularensis subsp. novicida (strain U112).